The primary structure comprises 261 residues: 1-(5-phosphoribosyl)-5-[(5-phosphoribosylamino)methylideneamino] imidazole-4-carboxamide isomerase (261 aa).

Asp15 acts as the Proton acceptor in catalysis. Catalysis depends on Asp136, which acts as the Proton donor.

It belongs to the HisA/HisF family.

It localises to the cytoplasm. It carries out the reaction 1-(5-phospho-beta-D-ribosyl)-5-[(5-phospho-beta-D-ribosylamino)methylideneamino]imidazole-4-carboxamide = 5-[(5-phospho-1-deoxy-D-ribulos-1-ylimino)methylamino]-1-(5-phospho-beta-D-ribosyl)imidazole-4-carboxamide. The protein operates within amino-acid biosynthesis; L-histidine biosynthesis; L-histidine from 5-phospho-alpha-D-ribose 1-diphosphate: step 4/9. In Synechococcus sp. (strain JA-3-3Ab) (Cyanobacteria bacterium Yellowstone A-Prime), this protein is 1-(5-phosphoribosyl)-5-[(5-phosphoribosylamino)methylideneamino] imidazole-4-carboxamide isomerase.